An 823-amino-acid chain; its full sequence is Zygotic DNA replication licensing factor mcm6 (823 aa).

The segment at 159–186 (CLDCQTLVRDVEQQFKYTQPSICRNPVC) adopts a C4-type zinc-finger fold. An MCM domain is found at 347–554 (LYHNLCTSLF…TDYAIARRIV (208 aa)). ATP is bound at residue 397–404 (GDPSTAKS). An Arginine finger motif is present at residues 529–532 (SRFD). The tract at residues 666 to 713 (NLDQEDEHEAEEEPQEVINGDASVPSGVNGHVNGMNGHAEEPNAATPK) is disordered. Over residues 667–680 (LDQEDEHEAEEEPQ) the composition is skewed to acidic residues. A compositionally biased stretch (low complexity) spans 692 to 702 (GVNGHVNGMNG).

Belongs to the MCM family. Component of the mcm2-7 complex (RLF-M). The complex forms a toroidal hexameric ring with the proposed subunit order mcm2-mcm6-mcm4-mcm7-mcm3-mcm5. Begins to associate with zmcm3, mcm4 and mcm7 into mcm complexes at the neurula stage.

The protein localises to the nucleus. It carries out the reaction ATP + H2O = ADP + phosphate + H(+). Acts as a component of the mcm2-7 complex (mcm complex) which is the putative replicative helicase essential for 'once per cell cycle' DNA replication initiation and elongation in eukaryotic cells. The active ATPase sites in the mcm2-7 ring are formed through the interaction surfaces of two neighboring subunits such that a critical structure of a conserved arginine finger motif is provided in trans relative to the ATP-binding site of the Walker A box of the adjacent subunit. The six ATPase active sites, however, are likely to contribute differentially to the complex helicase activity. The existence of maternal and zygotic forms of mcm3 and mcm6 suggests that specific forms of mcm2-7 complexes may be used during different stages of development. May replace mmcm6 in the mcm2-7 complex. The polypeptide is Zygotic DNA replication licensing factor mcm6 (Xenopus tropicalis (Western clawed frog)).